Here is a 381-residue protein sequence, read N- to C-terminus: MNGVAQDKVHGLEQTTQWNQQASQKNLTNNPAPKAVTGFKLDKGRAYRKLNEAWPVYEPLDSTKDGKGKDKDGWTTSGASEPKGDAPLVSSTESQMAAVTDSQQSGHNSGLVSLAQRSTTVAVQKSDSSGSQGQGTTDNKFQKYLNTAQALHQMGVIVPSLETWPGKPSTGIATRAGGGVSVQAATRQSSSTNEDLPNVITQLYHTSTSQLAYLNGQIVVMGSNAVPSLWYWVVDERTTSGRATWWAHTELNWGTDKQKQFVENQLGFKDDSNSSLTNFKSQGLTQPAYLIAGLDVVQDHLVFAAFKAGAVGYDMTTDSNASTKDQALAWSTTAGLDSAGGYNKLVENTGGLNGPINELVYPARHLCLCDPGEWDERGESE.

Residues 1–109 (MNGVAQDKVH…TDSQQSGHNS (109 aa)) form a disordered region. A compositionally biased stretch (polar residues) spans 13 to 31 (EQTTQWNQQASQKNLTNNP). Composition is skewed to basic and acidic residues over residues 40–51 (KLDKGRAYRKLN) and 61–73 (DSTK…DKDG). Residues 89–109 (VSSTESQMAAVTDSQQSGHNS) show a composition bias toward polar residues.

The protein belongs to the MgpC family.

This Mycoplasma pneumoniae (strain ATCC 29342 / M129 / Subtype 1) (Mycoplasmoides pneumoniae) protein is Putative MgpC-like protein MPN_503.